Reading from the N-terminus, the 466-residue chain is Ribulose bisphosphate carboxylase large chain (466 aa).

Lys5 is subject to N6,N6,N6-trimethyllysine. Asn114 and Thr164 together coordinate substrate. Lys166 serves as the catalytic Proton acceptor. Lys168 contributes to the substrate binding site. Positions 192, 194, and 195 each coordinate Mg(2+). Position 192 is an N6-carboxylysine (Lys192). Catalysis depends on His285, which acts as the Proton acceptor. Substrate is bound by residues Arg286, His318, and Ser370.

It belongs to the RuBisCO large chain family. Type I subfamily. Heterohexadecamer of 8 large chains and 8 small chains; disulfide-linked. The disulfide link is formed within the large subunit homodimers. It depends on Mg(2+) as a cofactor. The disulfide bond which can form in the large chain dimeric partners within the hexadecamer appears to be associated with oxidative stress and protein turnover.

It is found in the plastid. It localises to the chloroplast. The enzyme catalyses 2 (2R)-3-phosphoglycerate + 2 H(+) = D-ribulose 1,5-bisphosphate + CO2 + H2O. It catalyses the reaction D-ribulose 1,5-bisphosphate + O2 = 2-phosphoglycolate + (2R)-3-phosphoglycerate + 2 H(+). In terms of biological role, ruBisCO catalyzes two reactions: the carboxylation of D-ribulose 1,5-bisphosphate, the primary event in carbon dioxide fixation, as well as the oxidative fragmentation of the pentose substrate in the photorespiration process. Both reactions occur simultaneously and in competition at the same active site. This is Ribulose bisphosphate carboxylase large chain from Eremothamnus marlothianus.